The chain runs to 358 residues: DNA replication and repair protein RecF (358 aa).

33-40 serves as a coordination point for ATP; the sequence is GENGAGKT.

The protein belongs to the RecF family.

The protein resides in the cytoplasm. Functionally, the RecF protein is involved in DNA metabolism; it is required for DNA replication and normal SOS inducibility. RecF binds preferentially to single-stranded, linear DNA. It also seems to bind ATP. The polypeptide is DNA replication and repair protein RecF (Deinococcus geothermalis (strain DSM 11300 / CIP 105573 / AG-3a)).